A 156-amino-acid polypeptide reads, in one-letter code: CD-NTase/cGAS isopeptidase (156 aa).

One can recognise an MPN domain in the interval 9 to 147 (IDDFDNHVVI…WIGKKIKNDI (139 aa)). Residue glutamate 38 is the Proton donor/acceptor of the active site. Zn(2+) is bound by residues histidine 100, histidine 102, and aspartate 113. A JAMM motif motif is present at residues 100–113 (HTHPEDFPHPSFID).

Belongs to the peptidase M67B family. Cap3 isopeptidase subfamily.

Metalloprotease priming reversal component of a CBASS antivirus system. CBASS (cyclic oligonucleotide-based antiphage signaling system) provides immunity against bacteriophages. The CD-NTase protein (DncV) synthesizes cyclic nucleotides in response to infection; these serve as specific second messenger signals. The signals activate a diverse range of effectors, leading to bacterial cell death and thus abortive phage infection. A type II-A(GA) CBASS system. Functionally, reverses the primed state of DncV, the CD-NTase, cleaving it from cellular proteins. Cleaves a Sumo-DncV-DncV fusion protein precisely between the 2 DncV moieties. Its function is as follows. Protects E.coli against phage infection. When capV and dncV are introduced in E.coli MG1655 there is 1000-fold protection against phage P1; protection against other phage (T4, T5 and T6) requires the 2 subsequent genes. In another paper the capV-dncV-cap2-cap3 operon gives 10(4)-10(5)-fold protection against phages lambda, T2, T4 and T6, about 1000-fold protection against P1 and 10-fold protection against T5. The chain is CD-NTase/cGAS isopeptidase from Escherichia coli (strain TW11681).